The sequence spans 287 residues: ATP synthase gamma chain (287 aa).

Belongs to the ATPase gamma chain family. F-type ATPases have 2 components, CF(1) - the catalytic core - and CF(0) - the membrane proton channel. CF(1) has five subunits: alpha(3), beta(3), gamma(1), delta(1), epsilon(1). CF(0) has three main subunits: a, b and c.

The protein resides in the cell inner membrane. Produces ATP from ADP in the presence of a proton gradient across the membrane. The gamma chain is believed to be important in regulating ATPase activity and the flow of protons through the CF(0) complex. This chain is ATP synthase gamma chain, found in Geobacter sp. (strain M21).